The sequence spans 310 residues: ADP-L-glycero-D-manno-heptose-6-epimerase (310 aa).

Residues 10 to 11 (FI), 31 to 32 (DN), Lys38, Lys53, 75 to 79 (EGACS), and Asn92 each bind NADP(+). Tyr140 acts as the Proton acceptor in catalysis. Lys144 serves as a coordination point for NADP(+). A substrate-binding site is contributed by Asn169. NADP(+) is bound by residues Val170 and Lys178. Lys178 serves as the catalytic Proton acceptor. Substrate-binding positions include Ser180, His187, 201-204 (FEGS), and Arg209. Position 267 is an N6-acetyllysine (Lys267). Position 272 (Tyr272) interacts with substrate.

Belongs to the NAD(P)-dependent epimerase/dehydratase family. HldD subfamily. As to quaternary structure, homopentamer. Requires NADP(+) as cofactor.

It carries out the reaction ADP-D-glycero-beta-D-manno-heptose = ADP-L-glycero-beta-D-manno-heptose. It participates in nucleotide-sugar biosynthesis; ADP-L-glycero-beta-D-manno-heptose biosynthesis; ADP-L-glycero-beta-D-manno-heptose from D-glycero-beta-D-manno-heptose 7-phosphate: step 4/4. Its function is as follows. Catalyzes the interconversion between ADP-D-glycero-beta-D-manno-heptose and ADP-L-glycero-beta-D-manno-heptose via an epimerization at carbon 6 of the heptose. This Escherichia coli (strain ATCC 8739 / DSM 1576 / NBRC 3972 / NCIMB 8545 / WDCM 00012 / Crooks) protein is ADP-L-glycero-D-manno-heptose-6-epimerase.